A 36-amino-acid chain; its full sequence is Photosystem I reaction center subunit VIII (36 aa).

Residues P7–Y29 traverse the membrane as a helical segment.

The protein belongs to the PsaI family.

The protein localises to the plastid. Its subcellular location is the chloroplast thylakoid membrane. May help in the organization of the PsaL subunit. This chain is Photosystem I reaction center subunit VIII, found in Gracilaria tenuistipitata var. liui (Red alga).